A 352-amino-acid chain; its full sequence is Peptide chain release factor 1 (352 aa).

An N5-methylglutamine modification is found at Q230.

The protein belongs to the prokaryotic/mitochondrial release factor family. In terms of processing, methylated by PrmC. Methylation increases the termination efficiency of RF1.

Its subcellular location is the cytoplasm. Peptide chain release factor 1 directs the termination of translation in response to the peptide chain termination codons UAG and UAA. This is Peptide chain release factor 1 from Exiguobacterium sibiricum (strain DSM 17290 / CCUG 55495 / CIP 109462 / JCM 13490 / 255-15).